Reading from the N-terminus, the 179-residue chain is Large ribosomal subunit protein uL5 (179 aa).

It belongs to the universal ribosomal protein uL5 family. Part of the 50S ribosomal subunit; part of the 5S rRNA/L5/L18/L25 subcomplex. Contacts the 5S rRNA and the P site tRNA. Forms a bridge to the 30S subunit in the 70S ribosome.

In terms of biological role, this is one of the proteins that bind and probably mediate the attachment of the 5S RNA into the large ribosomal subunit, where it forms part of the central protuberance. In the 70S ribosome it contacts protein S13 of the 30S subunit (bridge B1b), connecting the 2 subunits; this bridge is implicated in subunit movement. Contacts the P site tRNA; the 5S rRNA and some of its associated proteins might help stabilize positioning of ribosome-bound tRNAs. The chain is Large ribosomal subunit protein uL5 from Janthinobacterium sp. (strain Marseille) (Minibacterium massiliensis).